A 298-amino-acid chain; its full sequence is Protoheme IX farnesyltransferase (298 aa).

8 helical membrane passes run 23-43 (VTQLAVFCAVIGMFLAVPGLP), 49-69 (LFGTIGIWLLAAAAFAINCLI), 95-115 (VLSLSGLLGGAGMLVLYHLVN), 117-137 (LTMWLTFATFVGYAVIYTVIL), 144-164 (NIVIGGLSGAMPPALGWASVA), 171-191 (AWVLVLIIFIWTPPHFWALAL), 234-254 (FMHMNGLLYLLAAVILGGIFV), and 276-296 (SILYLALLFGALLVDHWVGVL).

It belongs to the UbiA prenyltransferase family. Protoheme IX farnesyltransferase subfamily.

The protein localises to the cell inner membrane. It catalyses the reaction heme b + (2E,6E)-farnesyl diphosphate + H2O = Fe(II)-heme o + diphosphate. The protein operates within porphyrin-containing compound metabolism; heme O biosynthesis; heme O from protoheme: step 1/1. Functionally, converts heme B (protoheme IX) to heme O by substitution of the vinyl group on carbon 2 of heme B porphyrin ring with a hydroxyethyl farnesyl side group. This chain is Protoheme IX farnesyltransferase, found in Bordetella avium (strain 197N).